The chain runs to 926 residues: Alpha-L-rhamnosidase (926 aa).

An N-terminal signal peptide occupies residues M1 to S25. C26 carries the N-palmitoyl cysteine lipid modification. Residue C26 is the site of S-diacylglycerol cysteine attachment. Residues D504, R508–E510, D517, and W569 contribute to the alpha-L-rhamnose site. The Proton donor role is filled by E510. The active-site Proton acceptor is E779. H800 lines the alpha-L-rhamnose pocket.

The protein belongs to the glycosyl hydrolase 78 family.

It localises to the cell membrane. It catalyses the reaction Hydrolysis of terminal non-reducing alpha-L-rhamnose residues in alpha-L-rhamnosides.. Functionally, alpha-L-rhamnosidase involved in ulvan degradation. Ulvan is the main polysaccharide component of the Ulvales (green seaweed) cell wall. It is composed of disaccharide building blocks comprising 3-sulfated rhamnose (Rha3S) linked to D-glucuronic acid (GlcA), L-iduronic acid (IduA), or D-xylose (Xyl). Alpha-L-rhamnosidase converts Rha-Xyl-Rha3S, the product of a sulfatase acting on Rha3S-Xyl-Rha3S oligosaccharides, to Rha and Xyl-Rha3S. The enzyme is able to degrade p-nitrophenyl-alpha-L-rhamnopyranoside (PNP-Rha) in vitro. This Formosa agariphila (strain DSM 15362 / KCTC 12365 / LMG 23005 / KMM 3901 / M-2Alg 35-1) protein is Alpha-L-rhamnosidase.